The following is a 509-amino-acid chain: Transcription factor atf-7 (509 aa).

Residues 283-303 (TVSSYHSPLGASSQPPSTQKS) show a composition bias toward polar residues. Disordered stretches follow at residues 283-318 (TVSS…EKQI) and 337-400 (NMSS…ILER). Residues 308 to 318 (SWDHINGEKQI) are compositionally biased toward basic and acidic residues. Positions 337 to 364 (NMSSSGSDQDQSADMSNAGSTASTSTGN) are enriched in low complexity. Residues 390–400 (PDERRNTILER) are compositionally biased toward basic and acidic residues. The region spanning 391–464 (DERRNTILER…TERESRCVCL (74 aa)) is the bZIP domain. A basic motif region spans residues 393 to 413 (RRNTILERNKAAAVRYRKRKK). The leucine-zipper stretch occupies residues 419 to 450 (MMGRVQAMEAEKNQLLAIQTQNQVLRRELERV).

This sequence belongs to the bZIP family. Interacts with serine/threonine kinase pmk-1; perhaps in a manner dependent on dual specificity protein kinase sek-1. Expressed in intestinal cells.

The protein localises to the nucleus. It localises to the chromosome. Transcription factor which regulates the transcription of various genes, including those involved in innate immunity and oxidative stress responses. Binds to promoter regions of genes, probably at 5'-[GACGTCA]-3' consensus sequences. Together with transcription factor daf-19, involved in regulation of the serotonergic response of ADF neurons to pathogenic food. Modulates response to infection by the Gram-negative bacterium P.aeruginosa, acting downstream of the p38 signal transduction pathway effector serine/threonine kinase pmk-1. May act with transcription factor elt-2 to control p38 gene induction in response to bacterial infection. May be phosphorylated by pmk-1. Regulates transcription of the metallothionein gene, mtl-1, perhaps acting downstream of pmk-1. The protein is Transcription factor atf-7 of Caenorhabditis elegans.